The sequence spans 497 residues: UDP-N-acetylmuramoyl-L-alanyl-D-glutamate--2,6-diaminopimelate ligase (497 aa).

Ser-33 is a UDP-N-acetyl-alpha-D-muramoyl-L-alanyl-D-glutamate binding site. 119–125 (GTNGKTT) is a binding site for ATP. Residues 161-162 (TT), Ser-188, Gln-194, and Arg-196 contribute to the UDP-N-acetyl-alpha-D-muramoyl-L-alanyl-D-glutamate site. The residue at position 228 (Lys-228) is an N6-carboxylysine. Residues Arg-390, 414–417 (DNPR), Gly-465, and Glu-469 each bind meso-2,6-diaminopimelate. Residues 414–417 (DNPR) carry the Meso-diaminopimelate recognition motif motif.

It belongs to the MurCDEF family. MurE subfamily. Mg(2+) serves as cofactor. Post-translationally, carboxylation is probably crucial for Mg(2+) binding and, consequently, for the gamma-phosphate positioning of ATP.

It localises to the cytoplasm. The catalysed reaction is UDP-N-acetyl-alpha-D-muramoyl-L-alanyl-D-glutamate + meso-2,6-diaminopimelate + ATP = UDP-N-acetyl-alpha-D-muramoyl-L-alanyl-gamma-D-glutamyl-meso-2,6-diaminopimelate + ADP + phosphate + H(+). Its pathway is cell wall biogenesis; peptidoglycan biosynthesis. In terms of biological role, catalyzes the addition of meso-diaminopimelic acid to the nucleotide precursor UDP-N-acetylmuramoyl-L-alanyl-D-glutamate (UMAG) in the biosynthesis of bacterial cell-wall peptidoglycan. The protein is UDP-N-acetylmuramoyl-L-alanyl-D-glutamate--2,6-diaminopimelate ligase of Synechococcus elongatus (strain ATCC 33912 / PCC 7942 / FACHB-805) (Anacystis nidulans R2).